Here is a 237-residue protein sequence, read N- to C-terminus: 2,3-bisphosphoglycerate-dependent phosphoglycerate mutase (237 aa).

Residues 8 to 15 (RHGQSAWN), 21 to 22 (TG), Arg60, 87 to 90 (ERHY), Lys98, 114 to 115 (RR), and 180 to 181 (GN) each bind substrate. His9 acts as the Tele-phosphohistidine intermediate in catalysis. The active-site Proton donor/acceptor is the Glu87.

It belongs to the phosphoglycerate mutase family. BPG-dependent PGAM subfamily. In terms of assembly, homodimer.

It carries out the reaction (2R)-2-phosphoglycerate = (2R)-3-phosphoglycerate. The protein operates within carbohydrate degradation; glycolysis; pyruvate from D-glyceraldehyde 3-phosphate: step 3/5. In terms of biological role, catalyzes the interconversion of 2-phosphoglycerate and 3-phosphoglycerate. The protein is 2,3-bisphosphoglycerate-dependent phosphoglycerate mutase of Hyphomonas neptunium (strain ATCC 15444).